Reading from the N-terminus, the 223-residue chain is N-terminal Xaa-Pro-Lys N-methyltransferase 1 (223 aa).

M1 bears the N-acetylmethionine mark. Position 2 is an N-acetylthreonine; in N-terminal Xaa-Pro-Lys N-methyltransferase 1, N-terminally processed (T2). Residues G69, R74, 91-93, 119-120, and Q135 each bind S-adenosyl-L-methionine; these read DVT and LQ.

It belongs to the methyltransferase superfamily. NTM1 family.

It localises to the nucleus. It carries out the reaction N-terminal L-alanyl-L-prolyl-L-lysyl-[protein] + 3 S-adenosyl-L-methionine = N-terminal N,N,N-trimethyl-L-alanyl-L-prolyl-L-lysyl-[protein] + 3 S-adenosyl-L-homocysteine + 3 H(+). The enzyme catalyses N-terminal L-seryl-L-prolyl-L-lysyl-[protein] + 3 S-adenosyl-L-methionine = N-terminal N,N,N-trimethyl-L-seryl-L-prolyl-L-lysyl-[protein] + 3 S-adenosyl-L-homocysteine + 3 H(+). The catalysed reaction is N-terminal L-prolyl-L-prolyl-L-lysyl-[protein] + 2 S-adenosyl-L-methionine = N-terminal N,N-dimethyl-L-prolyl-L-prolyl-L-lysyl-[protein] + 2 S-adenosyl-L-homocysteine + 2 H(+). Functionally, distributive alpha-N-methyltransferase that methylates the N-terminus of target proteins containing the N-terminal motif [Ala/Gly/Pro/Ser]-Pro-Lys when the initiator Met is cleaved. Specifically catalyzes mono-, di- or tri-methylation of the exposed alpha-amino group of the Ala, Gly or Ser residue in the [Ala/Gly/Ser]-Pro-Lys motif and mono- or di-methylation of Pro in the Pro-Pro-Lys motif. Some of the substrates may be primed by NTMT2-mediated monomethylation. Catalyzes the trimethylation of the N-terminal Gly in CENPA (after removal of Met-1). Responsible for the N-terminal methylation of KLHL31, MYL2, MYL3, RB1, RCC1, RPL23A and SET. Required during mitosis for normal bipolar spindle formation and chromosome segregation via its action on RCC1. The chain is N-terminal Xaa-Pro-Lys N-methyltransferase 1 (Ntmt1) from Rattus norvegicus (Rat).